A 388-amino-acid chain; its full sequence is tRNA(Ile)-lysidine synthase (388 aa).

51–56 is a binding site for ATP; the sequence is SGGRDS.

The protein belongs to the tRNA(Ile)-lysidine synthase family.

Its subcellular location is the cytoplasm. It carries out the reaction cytidine(34) in tRNA(Ile2) + L-lysine + ATP = lysidine(34) in tRNA(Ile2) + AMP + diphosphate + H(+). Functionally, ligates lysine onto the cytidine present at position 34 of the AUA codon-specific tRNA(Ile) that contains the anticodon CAU, in an ATP-dependent manner. Cytidine is converted to lysidine, thus changing the amino acid specificity of the tRNA from methionine to isoleucine. This is tRNA(Ile)-lysidine synthase from Bifidobacterium longum (strain DJO10A).